Consider the following 183-residue polypeptide: Potassium-transporting ATPase KdpC subunit (183 aa).

The helical transmembrane segment at 11–31 threads the bilayer; the sequence is LALLMTLLTGVLYPLAVTGVA.

Belongs to the KdpC family. In terms of assembly, the system is composed of three essential subunits: KdpA, KdpB and KdpC.

The protein resides in the cell inner membrane. Its function is as follows. Part of the high-affinity ATP-driven potassium transport (or Kdp) system, which catalyzes the hydrolysis of ATP coupled with the electrogenic transport of potassium into the cytoplasm. This subunit acts as a catalytic chaperone that increases the ATP-binding affinity of the ATP-hydrolyzing subunit KdpB by the formation of a transient KdpB/KdpC/ATP ternary complex. The sequence is that of Potassium-transporting ATPase KdpC subunit from Pseudomonas putida (strain GB-1).